Reading from the N-terminus, the 113-residue chain is Large ribosomal subunit protein uL22 (113 aa).

It belongs to the universal ribosomal protein uL22 family. Part of the 50S ribosomal subunit.

Functionally, this protein binds specifically to 23S rRNA; its binding is stimulated by other ribosomal proteins, e.g. L4, L17, and L20. It is important during the early stages of 50S assembly. It makes multiple contacts with different domains of the 23S rRNA in the assembled 50S subunit and ribosome. The globular domain of the protein is located near the polypeptide exit tunnel on the outside of the subunit, while an extended beta-hairpin is found that lines the wall of the exit tunnel in the center of the 70S ribosome. The sequence is that of Large ribosomal subunit protein uL22 from Opitutus terrae (strain DSM 11246 / JCM 15787 / PB90-1).